The primary structure comprises 738 residues: Interleukin-12 receptor subunit beta-1 (738 aa).

Residues 1-19 (MDMMGLAGTSKHITFLLLC) form the signal peptide. Topologically, residues 20-565 (QLGASGPGDG…QRFSFEVQIS (546 aa)) are extracellular. Fibronectin type-III domains follow at residues 47–152 (GPRN…TPPL), 152–258 (LGHI…PEVL), 259–359 (PQAK…LPAQ), 360–465 (ELTE…GNAS), and 469–565 (TPRH…VQIS). An N-linked (GlcNAc...) asparagine glycan is attached at N50. C53 and C63 are disulfide-bonded. N-linked (GlcNAc...) asparagine glycosylation is found at N73, N86, N130, N144, N169, and N188. Positions 244-248 (WSDWS) match the WSXWS motif motif. N-linked (GlcNAc...) asparagine glycosylation is found at N330, N368, N374, N401, N463, and N477. A helical transmembrane segment spans residues 566-591 (RLSIIFASLGSFASVLLVGSLGYIGL). The Cytoplasmic segment spans residues 592–738 (NRAAWHLCPP…PGPPTLGQEA (147 aa)). Residues 598–606 (LCPPLPTPC) carry the Box 1 motif motif.

The protein belongs to the type I cytokine receptor family. Type 2 subfamily. In terms of assembly, dimer or oligomer; disulfide-linked. Interacts with IL12RB2 to form the high affinity IL12 receptor. Heterodimer with IL23R; in presence of IL23. The heterodimer forms the IL23 receptor.

It localises to the membrane. Functions as an interleukin receptor which binds interleukin-12 with low affinity and is involved in IL12 transduction. Associated with IL12RB2 it forms a functional, high affinity receptor for IL12. Also associates with IL23R to form the interleukin-23 receptor which functions in IL23 signal transduction probably through activation of the Jak-Stat signaling cascade. The chain is Interleukin-12 receptor subunit beta-1 (Il12rb1) from Mus musculus (Mouse).